Reading from the N-terminus, the 232-residue chain is RNA chaperone ProQ (232 aa).

The tract at residues 105–182 (EAKARVQAQR…REEQHTPVSD (78 aa)) is disordered. A compositionally biased stretch (basic and acidic residues) spans 117–136 (QQAKKREAAAAAGEKEDAPR). Positions 137–146 (RERKPRPTTP) are enriched in basic residues. Residues 147 to 177 (RRKEGAERKPRAQKPVEKAPKTVKAPREEQH) show a composition bias toward basic and acidic residues.

This sequence belongs to the ProQ family.

The protein localises to the cytoplasm. Its function is as follows. RNA chaperone with significant RNA binding, RNA strand exchange and RNA duplexing activities. May regulate ProP activity through an RNA-based, post-transcriptional mechanism. This is RNA chaperone ProQ from Escherichia coli (strain ATCC 8739 / DSM 1576 / NBRC 3972 / NCIMB 8545 / WDCM 00012 / Crooks).